The chain runs to 450 residues: Tubulin alpha-2 chain (450 aa).

Gln11, Glu71, Gly144, Thr145, Thr179, Asn206, and Asn228 together coordinate GTP. Position 71 (Glu71) interacts with Mg(2+). Glu254 is an active-site residue. Thr349 is subject to Phosphothreonine. A disordered region spans residues 430–450 (KDYEEVGAEGGDDEDDEGEEY). Over residues 431–450 (DYEEVGAEGGDDEDDEGEEY) the composition is skewed to acidic residues.

This sequence belongs to the tubulin family. Dimer of alpha and beta chains. A typical microtubule is a hollow water-filled tube with an outer diameter of 25 nm and an inner diameter of 15 nM. Alpha-beta heterodimers associate head-to-tail to form protofilaments running lengthwise along the microtubule wall with the beta-tubulin subunit facing the microtubule plus end conferring a structural polarity. Microtubules usually have 13 protofilaments but different protofilament numbers can be found in some organisms and specialized cells. Mg(2+) serves as cofactor. In terms of processing, undergoes a tyrosination/detyrosination cycle, the cyclic removal and re-addition of a C-terminal tyrosine residue by the enzymes tubulin tyrosine carboxypeptidase (TTCP) and tubulin tyrosine ligase (TTL), respectively. Acetylation of alpha chains at Lys-40 stabilizes microtubules and affects affinity and processivity of microtubule motors. This modification has a role in multiple cellular functions, ranging from cell motility, cell cycle progression or cell differentiation to intracellular trafficking and signaling.

Its subcellular location is the cytoplasm. It is found in the cytoskeleton. The catalysed reaction is GTP + H2O = GDP + phosphate + H(+). Tubulin is the major constituent of microtubules, a cylinder consisting of laterally associated linear protofilaments composed of alpha- and beta-tubulin heterodimers. Microtubules grow by the addition of GTP-tubulin dimers to the microtubule end, where a stabilizing cap forms. Below the cap, tubulin dimers are in GDP-bound state, owing to GTPase activity of alpha-tubulin. In Arabidopsis thaliana (Mouse-ear cress), this protein is Tubulin alpha-2 chain (TUBA2).